Reading from the N-terminus, the 172-residue chain is Signal peptidase complex catalytic subunit SEC11 (172 aa).

At 1–14 (MLSSLQNPRQAAAQ) the chain is on the cytoplasmic side. A helical; Signal-anchor for type II membrane protein membrane pass occupies residues 15 to 35 (LMNFGLILSTAFMMWKGLSVI). Over 36-172 (TDSPSPIVVV…MGLVVVLQRE (137 aa)) the chain is Lumenal. Residues serine 49, histidine 90, and aspartate 115 each act as charge relay system in the active site. The C-terminal short (CTS) helix stretch occupies residues 158–169 (VMLGIMGLVVVL).

Belongs to the peptidase S26B family. As to quaternary structure, component of the signal peptidase complex (SPC) composed of a catalytic subunit SEC11 and three accessory subunits SPC1, SPC2 and SPC3. The complex induces a local thinning of the ER membrane which is used to measure the length of the signal peptide (SP) h-region of protein substrates. This ensures the selectivity of the complex towards h-regions shorter than 18-20 amino acids. SPC associates with the translocon complex.

It localises to the endoplasmic reticulum membrane. It catalyses the reaction Cleavage of hydrophobic, N-terminal signal or leader sequences from secreted and periplasmic proteins.. Functionally, catalytic component of the signal peptidase complex (SPC) which catalyzes the cleavage of N-terminal signal sequences from nascent proteins as they are translocated into the lumen of the endoplasmic reticulum. Specifically cleaves N-terminal signal peptides that contain a hydrophobic alpha-helix (h-region) shorter than 18-20 amino acids. This Chaetomium globosum (strain ATCC 6205 / CBS 148.51 / DSM 1962 / NBRC 6347 / NRRL 1970) (Soil fungus) protein is Signal peptidase complex catalytic subunit SEC11 (SEC11).